Consider the following 670-residue polypeptide: tRNA 5-methylaminomethyl-2-thiouridine biosynthesis bifunctional protein MnmC (670 aa).

Residues 1 to 242 form a tRNA (mnm(5)s(2)U34)-methyltransferase region; that stretch reads MTFSVQHAEI…KRECLSGLKI (242 aa). The segment at 269-670 is FAD-dependent cmnm(5)s(2)U34 oxidoreductase; the sequence is IGGGIASFCA…KKWLKGSKVE (402 aa).

It in the N-terminal section; belongs to the methyltransferase superfamily. tRNA (mnm(5)s(2)U34)-methyltransferase family. In the C-terminal section; belongs to the DAO family. FAD is required as a cofactor.

It localises to the cytoplasm. The enzyme catalyses 5-aminomethyl-2-thiouridine(34) in tRNA + S-adenosyl-L-methionine = 5-methylaminomethyl-2-thiouridine(34) in tRNA + S-adenosyl-L-homocysteine + H(+). Catalyzes the last two steps in the biosynthesis of 5-methylaminomethyl-2-thiouridine (mnm(5)s(2)U) at the wobble position (U34) in tRNA. Catalyzes the FAD-dependent demodification of cmnm(5)s(2)U34 to nm(5)s(2)U34, followed by the transfer of a methyl group from S-adenosyl-L-methionine to nm(5)s(2)U34, to form mnm(5)s(2)U34. In Haemophilus influenzae (strain 86-028NP), this protein is tRNA 5-methylaminomethyl-2-thiouridine biosynthesis bifunctional protein MnmC.